The chain runs to 515 residues: Zinc-binding protein AdcA (515 aa).

The N-terminal stretch at 1–28 (MKKKILLMMSLISVFFAWQLTQAKQVLA) is a signal peptide. His-66 contributes to the Zn(2+) binding site. The tract at residues 125–148 (DHHHEDADKKHEHNKHSEEGHNHA) is disordered. Residues 129–148 (EDADKKHEHNKHSEEGHNHA) are his-rich loop. His-152, His-216, and Glu-291 together coordinate Zn(2+).

The protein belongs to the bacterial solute-binding protein 9 family.

Functionally, part of the ATP-binding cassette (ABC) transport system AdcABC involved in zinc import. Binds zinc with high affinity and specificity and delivers it to the membrane permease for translocation into the cytoplasm. This Streptococcus pyogenes serotype M1 protein is Zinc-binding protein AdcA (adcA).